A 77-amino-acid chain; its full sequence is Acyl carrier protein (77 aa).

Residues 1–76 enclose the Carrier domain; the sequence is MAVFDEVKDV…DVVNYIDGLK (76 aa). O-(pantetheine 4'-phosphoryl)serine is present on S36.

This sequence belongs to the acyl carrier protein (ACP) family. 4'-phosphopantetheine is transferred from CoA to a specific serine of apo-ACP by AcpS. This modification is essential for activity because fatty acids are bound in thioester linkage to the sulfhydryl of the prosthetic group.

The protein resides in the cytoplasm. It participates in lipid metabolism; fatty acid biosynthesis. Carrier of the growing fatty acid chain in fatty acid biosynthesis. This Campylobacter fetus subsp. fetus (strain 82-40) protein is Acyl carrier protein.